The chain runs to 137 residues: Large-conductance mechanosensitive channel (137 aa).

A run of 2 helical transmembrane segments spans residues 9–29 (AFAVKGNVVDMAVGIIIGAAF) and 79–99 (IQSVLDFVIVAFAIFMGVKAI).

It belongs to the MscL family. As to quaternary structure, homopentamer.

The protein resides in the cell inner membrane. Functionally, channel that opens in response to stretch forces in the membrane lipid bilayer. May participate in the regulation of osmotic pressure changes within the cell. The protein is Large-conductance mechanosensitive channel of Pseudomonas fluorescens (strain Pf0-1).